We begin with the raw amino-acid sequence, 2245 residues long: Basic helix-loop-helix domain-containing protein USF3 (2245 aa).

The tract at residues 1–28 is disordered; that stretch reads MPEMTENETPTKKQHRKKNRETHNAVER. The 52-residue stretch at 18–69 folds into the bHLH domain; the sequence is KNRETHNAVERHRKKKINAGINRIGELIPCSPALKQSKNMILDQAFKYITEL. Residues 77–112 adopt a coiled-coil conformation; it reads LLNGGNNEQAEEIKKLRKQLEEIQKENGRYIELLKA. Disordered regions lie at residues 271–290, 447–470, 881–900, 906–933, 1015–1041, 1164–1238, 1307–1331, 1460–1624, 1636–1664, 1736–1764, 1777–1815, 1834–1859, and 1891–2031; these read LHTCLNDQNSSENKNGQENP, SQTPSSAVTPVLNESGTSPTTSNH, SKSKSAEKSSPPSQESVTSE, AAKSKDSTPNLQQETSQDKPPSSLALSD, KNPQKSSLSDQMDHPDFSSENPKIVDS, PSEA…SITS, IPNSQIQEPLLKPSHESRKDSAKRA, IKQQ…VSGH, LEQQMVSQPSIVTRSSDMTCTPHRPERNR, TFKPSGASQQPQSNFEVQSSRNNEIGNPV, ISQNTGPPPIDRQKRLSYPPVQSIPTGNGIPSRDSENTC, GSQRSLSEHQRNTQCGPSSAIEYNCP, and STLN…QPAT. Residues 273–288 are compositionally biased toward polar residues; sequence TCLNDQNSSENKNGQE. A compositionally biased stretch (low complexity) spans 881-896; the sequence is SKSKSAEKSSPPSQES. The segment covering 912–925 has biased composition (polar residues); it reads STPNLQQETSQDKP. Composition is skewed to polar residues over residues 1185–1202 and 1219–1238; these read GTGQAEATPNEFNSQGSI and IKTSNASLQDSTSQPPSITS. The segment covering 1319 to 1331 has biased composition (basic and acidic residues); the sequence is PSHESRKDSAKRA. Positions 1462–1478 are enriched in low complexity; that stretch reads QQQQQQQQQQQQQQQQQ. Composition is skewed to polar residues over residues 1501–1520 and 1528–1538; these read SVHSQPHNVHQQRTLQQEVQ and VQGTQTSQLSL. Low complexity predominate over residues 1560 to 1569; it reads QQMQQQMQQH. A compositionally biased stretch (polar residues) spans 1570-1585; the sequence is FGSSQTEKSCENPSTS. Residues 1593-1624 are compositionally biased toward low complexity; sequence QNHLNQDIMHQQQDVGSRQQGSGVSSEHVSGH. The segment covering 1636–1654 has biased composition (polar residues); the sequence is LEQQMVSQPSIVTRSSDMT. Composition is skewed to polar residues over residues 1904-1923 and 1998-2007; these read GDIQGRNTSPNVSVQKSNPM and SGNQRQSTVF.

The protein localises to the nucleus. Functionally, involved in the negative regulation of epithelial-mesenchymal transition, the process by which epithelial cells lose their polarity and adhesion properties to become mesenchymal cells with enhanced migration and invasive properties. In Homo sapiens (Human), this protein is Basic helix-loop-helix domain-containing protein USF3.